A 387-amino-acid chain; its full sequence is Mitochondrial import inner membrane translocase subunit TIM50 (387 aa).

Residues 1-26 (MSAVSVYPMCVRASRGLLRLRQGARC) constitute a mitochondrion transit peptide. Over 27–100 (STAPPLLDVV…QKENTAYAKK (74 aa)) the chain is Mitochondrial matrix. A disordered region spans residues 61–93 (LQQQQKSQEQPPPEGEDSGHKQDEQGEDKKQKE). Residues 77 to 93 (DSGHKQDEQGEDKKQKE) are compositionally biased toward basic and acidic residues. Residues 101–121 (MVLRLAGIMGLGGTVGIVYIF) form a helical membrane-spanning segment. The Mitochondrial intermembrane portion of the chain corresponds to 122–387 (GSNSVDEQGN…AGRFWSRKQQ (266 aa)). In terms of domain architecture, FCP1 homology spans 178–321 (YYQPPYTLVL…YDLAAFLKTI (144 aa)).

It belongs to the TIM50 family. As to quaternary structure, component of the TIM23 complex at least composed of timm23, timm17 and timm50.

The protein resides in the mitochondrion inner membrane. Essential component of the TIM23 complex, a complex that mediates the translocation of transit peptide-containing proteins across the mitochondrial inner membrane. The chain is Mitochondrial import inner membrane translocase subunit TIM50 (timm50) from Danio rerio (Zebrafish).